The sequence spans 434 residues: Maltoporin (434 aa).

A signal peptide spans 1 to 25 (MMTTLRKLPLALAIAAGVLTTQAMA).

The protein belongs to the porin LamB (TC 1.B.3) family. In terms of assembly, homotrimer formed of three 18-stranded antiparallel beta-barrels, containing three independent channels.

It localises to the cell outer membrane. It catalyses the reaction beta-maltose(in) = beta-maltose(out). Its function is as follows. Involved in the transport of maltose and maltodextrins. The polypeptide is Maltoporin (Serratia proteamaculans (strain 568)).